Reading from the N-terminus, the 211-residue chain is Transcriptional regulatory protein RcsA (211 aa).

The region spanning 135-200 (SEVHPFTLSQ…VIYHVVRLTD (66 aa)) is the HTH luxR-type domain. A DNA-binding region (H-T-H motif) is located at residues 159 to 178 (TIQISDKMQIKAKTVSSHKG).

Belongs to the RcsA family.

Its function is as follows. Component of the Rcs signaling system, which controls transcription of numerous genes. Binds to DNA to regulate expression of genes. The protein is Transcriptional regulatory protein RcsA of Erwinia amylovora (Fire blight bacteria).